A 213-amino-acid chain; its full sequence is Octanoyltransferase (213 aa).

Positions 28–203 constitute a BPL/LPL catalytic domain; that stretch reads GTSPETLLLL…RFPFLLDERL (176 aa). Substrate contacts are provided by residues 66–73, 133–135, and 146–148; these read RGGDVTFH, SIG, and GFA. The Acyl-thioester intermediate role is filled by C164.

The protein belongs to the LipB family.

It is found in the cytoplasm. The catalysed reaction is octanoyl-[ACP] + L-lysyl-[protein] = N(6)-octanoyl-L-lysyl-[protein] + holo-[ACP] + H(+). It functions in the pathway protein modification; protein lipoylation via endogenous pathway; protein N(6)-(lipoyl)lysine from octanoyl-[acyl-carrier-protein]: step 1/2. Catalyzes the transfer of endogenously produced octanoic acid from octanoyl-acyl-carrier-protein onto the lipoyl domains of lipoate-dependent enzymes. Lipoyl-ACP can also act as a substrate although octanoyl-ACP is likely to be the physiological substrate. This is Octanoyltransferase from Geobacter metallireducens (strain ATCC 53774 / DSM 7210 / GS-15).